The chain runs to 453 residues: Chromosomal replication initiator protein DnaA (453 aa).

The interval 1 to 74 (MKEKQFWNRI…GFEIYDAEIT (74 aa)) is domain I, interacts with DnaA modulators. Residues 74 to 113 (TPHYIFTKPQDTTSSQVEEATNLTLYDYSPKLVSIPYSDT) are domain II. Residues 114-331 (GLKEKYTFDN…GAINDITLIA (218 aa)) are domain III, AAA+ region. Residues Gly158, Gly160, Lys161, and Thr162 each coordinate ATP. A domain IV, binds dsDNA region spans residues 332 to 453 (RVKKIKDITI…EIESIKKKIK (122 aa)).

This sequence belongs to the DnaA family. Oligomerizes as a right-handed, spiral filament on DNA at oriC.

It localises to the cytoplasm. Its function is as follows. Plays an essential role in the initiation and regulation of chromosomal replication. ATP-DnaA binds to the origin of replication (oriC) to initiate formation of the DNA replication initiation complex once per cell cycle. Binds the DnaA box (a 9 base pair repeat at the origin) and separates the double-stranded (ds)DNA. Forms a right-handed helical filament on oriC DNA; dsDNA binds to the exterior of the filament while single-stranded (ss)DNA is stabiized in the filament's interior. The ATP-DnaA-oriC complex binds and stabilizes one strand of the AT-rich DNA unwinding element (DUE), permitting loading of DNA polymerase. After initiation quickly degrades to an ADP-DnaA complex that is not apt for DNA replication. Binds acidic phospholipids. In Streptococcus pneumoniae (strain Taiwan19F-14), this protein is Chromosomal replication initiator protein DnaA.